The following is a 316-amino-acid chain: Probable cell division protein WhiA (316 aa).

Residues T275 to T309 constitute a DNA-binding region (H-T-H motif).

Belongs to the WhiA family.

Functionally, involved in cell division and chromosome segregation. The polypeptide is Probable cell division protein WhiA (Bacillus velezensis (strain DSM 23117 / BGSC 10A6 / LMG 26770 / FZB42) (Bacillus amyloliquefaciens subsp. plantarum)).